Here is an 816-residue protein sequence, read N- to C-terminus: Transducer protein Htr18 (816 aa).

A run of 2 helical transmembrane segments spans residues 21–41 (VVIV…TQAV) and 282–302 (NIVV…LVIG). Positions 303 to 356 (RDALTALTDMSDRAEAIAAGDIDTAIEETTRIDEVGDLRRSFRDIQEYLQTVAG) constitute an HAMP 1 domain. The tract at residues 399-425 (DAQETAEQSRKEAEQSREEAEALAAAL) is disordered. The segment covering 405-418 (EQSRKEAEQSREEA) has biased composition (basic and acidic residues). In terms of domain architecture, HAMP 2 spans 423–476 (AALESQAQDIRETVEHAADGDLTQRLETDTDHESMAAIATALNSLLEELEGTIH). The Methyl-accepting transducer domain maps to 495 to 731 (SAEEVKRASG…EVVTMVDEVG (237 aa)). Residues 790 to 816 (GGAENTTGAFVRSASTDHSRDATHHDT) are disordered. Residues 793-803 (ENTTGAFVRSA) are compositionally biased toward polar residues. A compositionally biased stretch (basic and acidic residues) spans 804–816 (STDHSRDATHHDT).

It belongs to the methyl-accepting chemotaxis (MCP) protein family. Post-translationally, methylated by CheR.

Its subcellular location is the cell membrane. Functionally, potentially involved in chemo- or phototactic signal transduction. The chain is Transducer protein Htr18 (htr18) from Halobacterium salinarum (strain ATCC 29341 / DSM 671 / R1).